Reading from the N-terminus, the 429-residue chain is Glutamate-1-semialdehyde 2,1-aminomutase (429 aa).

Position 265 is an N6-(pyridoxal phosphate)lysine (Lys265).

It belongs to the class-III pyridoxal-phosphate-dependent aminotransferase family. HemL subfamily. Homodimer. Pyridoxal 5'-phosphate is required as a cofactor.

Its subcellular location is the cytoplasm. It catalyses the reaction (S)-4-amino-5-oxopentanoate = 5-aminolevulinate. Its pathway is porphyrin-containing compound metabolism; protoporphyrin-IX biosynthesis; 5-aminolevulinate from L-glutamyl-tRNA(Glu): step 2/2. The chain is Glutamate-1-semialdehyde 2,1-aminomutase from Alkalilimnicola ehrlichii (strain ATCC BAA-1101 / DSM 17681 / MLHE-1).